The chain runs to 279 residues: Methyltransferase ausD (279 aa).

Residues 124-125 (DI) and 152-153 (DV) each bind S-adenosyl-L-methionine.

The protein belongs to the class I-like SAM-binding methyltransferase superfamily. In terms of assembly, homodimer.

Its pathway is secondary metabolite biosynthesis; terpenoid biosynthesis. Functionally, methyltransferase; part of the gene cluster A that mediates the biosynthesis of the fungal meroterpenoid acetoxydehydroaustin. The first step of the pathway is the synthesis of 3,5-dimethylorsellinic acid by the polyketide synthase ausA. 3,5-dimethylorsellinic acid is then prenylated by the polyprenyl transferase ausN. Further epoxidation by the FAD-dependent monooxygenase ausM and cyclization by the probable terpene cyclase ausL lead to the formation of protoaustinoid A. Protoaustinoid A is then oxidized to spiro-lactone preaustinoid A3 by the combined action of the FAD-binding monooxygenases ausB and ausC, and the dioxygenase ausE. Acid-catalyzed keto-rearrangement and ring contraction of the tetraketide portion of preaustinoid A3 by ausJ lead to the formation of preaustinoid A4. The aldo-keto reductase ausK, with the help of ausH, is involved in the next step by transforming preaustinoid A4 into isoaustinone which is in turn hydroxylated by the P450 monooxygenase ausI to form austinolide. The cytochrome P450 monooxygenase ausG then modifies austinolide to austinol. Austinol is further acetylated to austin by the O-acetyltransferase ausP, which spontaneously changes to dehydroaustin. The cytochrome P450 monooxygenase then converts dehydroaustin is into 7-dehydrodehydroaustin. The hydroxylation catalyzed by ausR permits the second O-acetyltransferase ausQ to add an additional acetyl group to the molecule, leading to the formation of acetoxydehydroaustin. Due to genetic rearrangements of the clusters and the subsequent loss of some enzymes, the end product of the Penicillium brasilianum austinoid biosynthesis clusters is acetoxydehydroaustin. The protein is Methyltransferase ausD of Penicillium brasilianum.